The primary structure comprises 688 residues: Elongation factor G (688 aa).

Residues 8-282 (INFRNFGIMA…AVVDFLPSPV (275 aa)) form the tr-type G domain. GTP contacts are provided by residues 17–24 (AHIDAGKT), 81–85 (DTPGH), and 135–138 (NKMD).

The protein belongs to the TRAFAC class translation factor GTPase superfamily. Classic translation factor GTPase family. EF-G/EF-2 subfamily.

It localises to the cytoplasm. Its function is as follows. Catalyzes the GTP-dependent ribosomal translocation step during translation elongation. During this step, the ribosome changes from the pre-translocational (PRE) to the post-translocational (POST) state as the newly formed A-site-bound peptidyl-tRNA and P-site-bound deacylated tRNA move to the P and E sites, respectively. Catalyzes the coordinated movement of the two tRNA molecules, the mRNA and conformational changes in the ribosome. The protein is Elongation factor G (fusA) of Mycoplasma pneumoniae (strain ATCC 29342 / M129 / Subtype 1) (Mycoplasmoides pneumoniae).